Reading from the N-terminus, the 355-residue chain is Cyclin-D1-binding protein 1 (355 aa).

A2 bears the N-acetylalanine mark. Interaction with TCF3 stretches follow at residues 2 to 181 (ASST…VDLV) and 147 to 355 (ISCN…AVEL). Residues 2-187 (ASSTTPVSFL…VDLVKDAHEE (186 aa)) are interaction with RPLP0. The required for interaction with CCND1 stretch occupies residues 2–205 (ASSTTPVSFL…DPYCGLLDDS (204 aa)). Positions 203 to 224 (DDSEDNSDSHHNEDGVGLPSNR) are disordered. Residues 235–355 (LITPCLALVR…KELTQRAVEL (121 aa)) are interaction with RPLP0.

This sequence belongs to the CCNDBP1 family. Interacts with CCND1 and GRAP2. May also interact with COPS5, RPLP0, SIRT6, SYF2 and TCF3. Phosphorylated.

It is found in the cytoplasm. The protein localises to the nucleus. May negatively regulate cell cycle progression. May act at least in part via inhibition of the cyclin-D1/CDK4 complex, thereby preventing phosphorylation of RB1 and blocking E2F-dependent transcription. The chain is Cyclin-D1-binding protein 1 (Ccndbp1) from Rattus norvegicus (Rat).